The following is a 2403-amino-acid chain: Highly reducing polyketide synthase fogA (2403 aa).

Residues 3–428 enclose the Ketosynthase family 3 (KS3) domain; that stretch reads DDPPCIVGMA…GANAHVILES (426 aa). Catalysis depends on for beta-ketoacyl synthase activity residues Cys-176, His-311, and His-350. The malonyl-CoA:ACP transacylase (MAT) domain stretch occupies residues 538–858; that stretch reads VFTGQGAQYA…PYAPSLVRKE (321 aa). The active-site For malonyltransferase activity is Ser-632. Residues 929–1068 are N-terminal hotdog fold; that stretch reads HELLGTFALT…GSIRVVEPLT (140 aa). The interval 929–1238 is dehydratase (DH) domain; it reads HELLGTFALT…DARMSLYTGK (310 aa). The region spanning 929–1241 is the PKS/mFAS DH domain; the sequence is HELLGTFALT…MSLYTGKSSA (313 aa). His-961 acts as the Proton acceptor; for dehydratase activity in catalysis. Residues 1084 to 1241 form a C-terminal hotdog fold region; that stretch reads SFEASPTNRW…MSLYTGKSSA (158 aa). Asp-1152 serves as the catalytic Proton donor; for dehydratase activity. The interval 1663–1981 is enoyl reductase (ER) domain; the sequence is GATDSMFFQQ…QQDRIGKIVI (319 aa). Positions 2006 to 2185 are ketoreductase (KR) domain; it reads VYLLIGCLGG…AVAVGLGMIS (180 aa). The interval 2280 to 2300 is disordered; it reads AQNSTSSSGSNSNTPTTAAPW. A compositionally biased stretch (low complexity) spans 2282–2296; sequence NSTSSSGSNSNTPTT. Residues 2320–2398 enclose the Carrier domain; sequence SLNAAILRLI…GLAVVVEGKL (79 aa). At Ser-2357 the chain carries O-(pantetheine 4'-phosphoryl)serine.

Pantetheine 4'-phosphate serves as cofactor.

The protein operates within secondary metabolite biosynthesis. Highly reducing polyketide synthase; part of the gene cluster that mediates the biosynthesis of flavoglaucin and congeners (including aspergin, dihydroauroglaucin and auroglaucin), prenylated salicylaldehyde derivatives carrying a saturated or an unsaturated C-7 side chain. FogA releases the carboxylic acid (8E,10E,12E)-3,5,7-trihydroxytetradeca-8,10,12-trienoic acid as its product, as well as derivatives with one and two double bonds. FogA is indeed able to reduce the initial triketide, thus being at least partially responsible for the differently saturated heptyl side chains of flavoglaucin congeners. The oxidoreductases fogB, fogC and fogD modify the nascent polyketide in fogA-bound form and, together, fogA, fogB, fogC and fogD are necessary for the formation of the aromatic core and the cyclized PKS products are released as salicyl alcohols. In particular, fogB is responsible for oxidation of a hydroxyl group or reduction of remaining double bond(s) at the C-7 residue whereas fogD is probably involved in the reductive release of the modified PKS products. The cytochrome P450 monooxygenase fogE is then responsible for the hydroxylation at C-3 of the benzene ring. The fogE products are substrates of the prenyltransferase fogH and the prenylated benzyl alcohols are subsequently oxidized by the fogF to produce the final aryl aldehydes flavoglaucin and congeners. The short-chain dehydrogenase fogG does not seem to be involved in the biosynthesis of the prenylated salicylaldehyde derivatives. This is Highly reducing polyketide synthase fogA from Aspergillus ruber (strain CBS 135680).